The following is a 215-amino-acid chain: Ran-specific GTPase-activating protein 1 (215 aa).

2 stretches are compositionally biased toward basic and acidic residues: residues 1–18 (MSAE…EEQK) and 26–35 (VASKQTEEAK). Residues 1 to 78 (MSAEQEKKTQ…ASPEVHFEPI (78 aa)) are disordered. Ser70 is modified (phosphoserine). Residues 74–210 (HFEPIVKLSA…FEKYQEENAK (137 aa)) enclose the RanBD1 domain.

The protein belongs to the RANBP1 family.

Its subcellular location is the cytoplasm. Its function is as follows. Stimulates the GTPase activity in the presence of RNA1. May potentiate the action of RanGAP1 (RNA1), thus playing the role of a negative regulator. This is Ran-specific GTPase-activating protein 1 (sbp1) from Schizosaccharomyces pombe (strain 972 / ATCC 24843) (Fission yeast).